The sequence spans 88 residues: Small ribosomal subunit protein uS15c (88 aa).

Belongs to the universal ribosomal protein uS15 family. As to quaternary structure, part of the 30S ribosomal subunit.

It is found in the plastid. The protein resides in the chloroplast. This Cycas taitungensis (Prince sago) protein is Small ribosomal subunit protein uS15c (rps15).